Reading from the N-terminus, the 313-residue chain is 4-hydroxy-3-methylbut-2-enyl diphosphate reductase (313 aa).

Position 12 (Cys12) interacts with [4Fe-4S] cluster. (2E)-4-hydroxy-3-methylbut-2-enyl diphosphate contacts are provided by His41 and His74. Residues His41 and His74 each contribute to the dimethylallyl diphosphate site. Isopentenyl diphosphate-binding residues include His41 and His74. Cys96 is a binding site for [4Fe-4S] cluster. His124 is a (2E)-4-hydroxy-3-methylbut-2-enyl diphosphate binding site. Dimethylallyl diphosphate is bound at residue His124. Isopentenyl diphosphate is bound at residue His124. The active-site Proton donor is Glu126. Thr164 lines the (2E)-4-hydroxy-3-methylbut-2-enyl diphosphate pocket. [4Fe-4S] cluster is bound at residue Cys194. (2E)-4-hydroxy-3-methylbut-2-enyl diphosphate is bound by residues Ser222, Ser223, Asn224, and Ser266. Dimethylallyl diphosphate contacts are provided by Ser222, Ser223, Asn224, and Ser266. 4 residues coordinate isopentenyl diphosphate: Ser222, Ser223, Asn224, and Ser266.

The protein belongs to the IspH family. [4Fe-4S] cluster serves as cofactor.

The catalysed reaction is isopentenyl diphosphate + 2 oxidized [2Fe-2S]-[ferredoxin] + H2O = (2E)-4-hydroxy-3-methylbut-2-enyl diphosphate + 2 reduced [2Fe-2S]-[ferredoxin] + 2 H(+). It carries out the reaction dimethylallyl diphosphate + 2 oxidized [2Fe-2S]-[ferredoxin] + H2O = (2E)-4-hydroxy-3-methylbut-2-enyl diphosphate + 2 reduced [2Fe-2S]-[ferredoxin] + 2 H(+). The protein operates within isoprenoid biosynthesis; dimethylallyl diphosphate biosynthesis; dimethylallyl diphosphate from (2E)-4-hydroxy-3-methylbutenyl diphosphate: step 1/1. Its pathway is isoprenoid biosynthesis; isopentenyl diphosphate biosynthesis via DXP pathway; isopentenyl diphosphate from 1-deoxy-D-xylulose 5-phosphate: step 6/6. Its function is as follows. Catalyzes the conversion of 1-hydroxy-2-methyl-2-(E)-butenyl 4-diphosphate (HMBPP) into a mixture of isopentenyl diphosphate (IPP) and dimethylallyl diphosphate (DMAPP). Acts in the terminal step of the DOXP/MEP pathway for isoprenoid precursor biosynthesis. In Protochlamydia amoebophila (strain UWE25), this protein is 4-hydroxy-3-methylbut-2-enyl diphosphate reductase.